Reading from the N-terminus, the 423-residue chain is Serine--tRNA ligase (423 aa).

The segment covering 1 to 12 (MIDLKALRENPD) has biased composition (basic and acidic residues). The tract at residues 1–26 (MIDLKALRENPDVGRASQRSRGEDPE) is disordered. 230-232 (TSE) is a binding site for L-serine. Residues 261-263 (RRE) and valine 277 contribute to the ATP site. An L-serine-binding site is contributed by glutamate 284. 348–351 (ELTS) contributes to the ATP binding site. Threonine 383 provides a ligand contact to L-serine.

It belongs to the class-II aminoacyl-tRNA synthetase family. Type-1 seryl-tRNA synthetase subfamily. As to quaternary structure, homodimer. The tRNA molecule binds across the dimer.

It localises to the cytoplasm. The enzyme catalyses tRNA(Ser) + L-serine + ATP = L-seryl-tRNA(Ser) + AMP + diphosphate + H(+). It catalyses the reaction tRNA(Sec) + L-serine + ATP = L-seryl-tRNA(Sec) + AMP + diphosphate + H(+). It functions in the pathway aminoacyl-tRNA biosynthesis; selenocysteinyl-tRNA(Sec) biosynthesis; L-seryl-tRNA(Sec) from L-serine and tRNA(Sec): step 1/1. Functionally, catalyzes the attachment of serine to tRNA(Ser). Is also able to aminoacylate tRNA(Sec) with serine, to form the misacylated tRNA L-seryl-tRNA(Sec), which will be further converted into selenocysteinyl-tRNA(Sec). The chain is Serine--tRNA ligase from Beutenbergia cavernae (strain ATCC BAA-8 / DSM 12333 / CCUG 43141 / JCM 11478 / NBRC 16432 / NCIMB 13614 / HKI 0122).